Reading from the N-terminus, the 289-residue chain is Probable branched-chain-amino-acid aminotransferase (289 aa).

Lys154 carries the N6-(pyridoxal phosphate)lysine modification.

This sequence belongs to the class-IV pyridoxal-phosphate-dependent aminotransferase family. Pyridoxal 5'-phosphate is required as a cofactor.

The enzyme catalyses L-leucine + 2-oxoglutarate = 4-methyl-2-oxopentanoate + L-glutamate. It catalyses the reaction L-isoleucine + 2-oxoglutarate = (S)-3-methyl-2-oxopentanoate + L-glutamate. The catalysed reaction is L-valine + 2-oxoglutarate = 3-methyl-2-oxobutanoate + L-glutamate. Its pathway is amino-acid biosynthesis; L-isoleucine biosynthesis; L-isoleucine from 2-oxobutanoate: step 4/4. It participates in amino-acid biosynthesis; L-leucine biosynthesis; L-leucine from 3-methyl-2-oxobutanoate: step 4/4. The protein operates within amino-acid biosynthesis; L-valine biosynthesis; L-valine from pyruvate: step 4/4. Functionally, acts on leucine, isoleucine and valine. The polypeptide is Probable branched-chain-amino-acid aminotransferase (ilvE) (Rickettsia bellii (strain RML369-C)).